The following is a 341-amino-acid chain: S-adenosylmethionine:tRNA ribosyltransferase-isomerase (341 aa).

Belongs to the QueA family. In terms of assembly, monomer.

The protein localises to the cytoplasm. It carries out the reaction 7-aminomethyl-7-carbaguanosine(34) in tRNA + S-adenosyl-L-methionine = epoxyqueuosine(34) in tRNA + adenine + L-methionine + 2 H(+). It functions in the pathway tRNA modification; tRNA-queuosine biosynthesis. Its function is as follows. Transfers and isomerizes the ribose moiety from AdoMet to the 7-aminomethyl group of 7-deazaguanine (preQ1-tRNA) to give epoxyqueuosine (oQ-tRNA). The protein is S-adenosylmethionine:tRNA ribosyltransferase-isomerase of Staphylococcus aureus (strain Mu3 / ATCC 700698).